The chain runs to 144 residues: Universal stress protein A homolog 1 (144 aa).

It belongs to the universal stress protein A family. In terms of assembly, homodimer.

It localises to the cytoplasm. In terms of biological role, involved in stress response. The sequence is that of Universal stress protein A homolog 1 (uspA1) from Coxiella burnetii (strain RSA 493 / Nine Mile phase I).